Reading from the N-terminus, the 339-residue chain is 5-dehydro-2-deoxygluconokinase (339 aa).

This sequence belongs to the carbohydrate kinase PfkB family.

It carries out the reaction 5-dehydro-2-deoxy-D-gluconate + ATP = 6-phospho-5-dehydro-2-deoxy-D-gluconate + ADP + H(+). Its pathway is polyol metabolism; myo-inositol degradation into acetyl-CoA; acetyl-CoA from myo-inositol: step 5/7. Its function is as follows. Catalyzes the phosphorylation of 5-dehydro-2-deoxy-D-gluconate (2-deoxy-5-keto-D-gluconate or DKG) to 6-phospho-5-dehydro-2-deoxy-D-gluconate (DKGP). This Clostridium tetani (strain Massachusetts / E88) protein is 5-dehydro-2-deoxygluconokinase.